Here is a 91-residue protein sequence, read N- to C-terminus: MVRVGAAAAVLVLAAAAAAMAAEPPTDDGAVRVAAGLTKCVSGCGSKVTSCLLGCYGGGGGAAAAATAMPFCVIGCTSDVLSCATGCSTSL.

A signal peptide spans 1–21 (MVRVGAAAAVLVLAAAAAAMA).

In terms of biological role, required for tapetum and pollen development. The chain is Anther-specific protein RTS from Oryza sativa subsp. japonica (Rice).